A 91-amino-acid chain; its full sequence is uncharacterized protein (91 aa).

This is an uncharacterized protein from Rickettsia conorii (strain ATCC VR-613 / Malish 7).